Reading from the N-terminus, the 150-residue chain is Photosystem II extrinsic protein V (150 aa).

Residues 1 to 20 (MIRVIMLLVLVWMTPMISWA) form the signal peptide. Residues Cys50, Cys53, His54, and His105 each contribute to the heme c site.

It belongs to the cytochrome c family. PsbV subfamily. In terms of assembly, PSII is composed of 1 copy each of membrane proteins PsbA, PsbB, PsbC, PsbD, PsbE, PsbF, PsbH, PsbI, PsbJ, PsbK, PsbL, PsbM, PsbT, PsbY, PsbZ, Psb30/Ycf12, at least 3 peripheral proteins of the oxygen-evolving complex and a large number of cofactors. It forms dimeric complexes. The extrinsic subunits in red algae are PsbO (OEC33), PsbQ', cytochrome c-550 and PsbU. Heme c serves as cofactor.

The protein localises to the plastid. It localises to the chloroplast thylakoid membrane. Functionally, one of the extrinsic, lumenal subunits of photosystem II (PSII). PSII is a light-driven water plastoquinone oxidoreductase, using light energy to abstract electrons from H(2)O, generating a proton gradient subsequently used for ATP formation. The extrinsic proteins stabilize the structure of photosystem II oxygen-evolving complex (OEC), the ion environment of oxygen evolution and protect the OEC against heat-induced inactivation. The chain is Photosystem II extrinsic protein V from Cyanidioschyzon merolae (strain NIES-3377 / 10D) (Unicellular red alga).